The following is a 302-amino-acid chain: Enoyl-CoA delta isomerase 1, mitochondrial (302 aa).

The N-terminal 41 residues, 1 to 41 (MALVASVRVPARVLLRAGARLPGAALGRTERAAGGGDGARR), are a transit peptide targeting the mitochondrion. Lys-61 bears the N6-acetyllysine; alternate mark. Lys-61 is subject to N6-succinyllysine; alternate. Lys-84 carries the post-translational modification N6-succinyllysine. N6-acetyllysine is present on Lys-89. Residues 106 to 110 (AGLDL), Gly-153, and Asn-177 contribute to the substrate site. Lys-283 bears the N6-acetyllysine; alternate mark. Lys-283 is subject to N6-succinyllysine; alternate. Lys-288 carries the N6-succinyllysine modification.

It belongs to the enoyl-CoA hydratase/isomerase family. In terms of assembly, homotrimer. As to expression, expressed in liver (at protein level).

It localises to the mitochondrion matrix. It catalyses the reaction a (3Z)-enoyl-CoA = a 4-saturated (2E)-enoyl-CoA. The enzyme catalyses a (3E)-enoyl-CoA = a 4-saturated (2E)-enoyl-CoA. It carries out the reaction (3Z)-octenoyl-CoA = (2E)-octenoyl-CoA. The catalysed reaction is (2E)-tetradecenoyl-CoA = (3Z)-tetradecenoyl-CoA. It catalyses the reaction (3Z)-dodecenoyl-CoA = (2E)-dodecenoyl-CoA. The enzyme catalyses (3Z)-hexenoyl-CoA = (2E)-hexenoyl-CoA. It carries out the reaction (3Z)-decenoyl-CoA = (2E)-decenoyl-CoA. It functions in the pathway lipid metabolism; fatty acid beta-oxidation. Key enzyme of fatty acid beta-oxidation. Able to isomerize both 3-cis (3Z) and 3-trans (3E) double bonds into the 2-trans (2E) form in a range of enoyl-CoA species, with a preference for (3Z)-enoyl-CoAs over (3E)-enoyl-CoAs. The catalytic efficiency of this enzyme is not affected by the fatty acyl chain length. The polypeptide is Enoyl-CoA delta isomerase 1, mitochondrial (ECI1) (Homo sapiens (Human)).